The chain runs to 596 residues: Aspartate--tRNA(Asp/Asn) ligase (596 aa).

Residue glutamate 175 participates in L-aspartate binding. Residues 199–202 (QQYK) are aspartate. Arginine 221 and histidine 454 together coordinate L-aspartate. Position 221 to 223 (221 to 223 (RDE)) interacts with ATP. Residue glutamate 488 participates in ATP binding. Arginine 495 contacts L-aspartate. 540-543 (GIDR) contacts ATP.

Belongs to the class-II aminoacyl-tRNA synthetase family. Type 1 subfamily. In terms of assembly, homodimer.

The protein resides in the cytoplasm. The enzyme catalyses tRNA(Asx) + L-aspartate + ATP = L-aspartyl-tRNA(Asx) + AMP + diphosphate. In terms of biological role, aspartyl-tRNA synthetase with relaxed tRNA specificity since it is able to aspartylate not only its cognate tRNA(Asp) but also tRNA(Asn). Reaction proceeds in two steps: L-aspartate is first activated by ATP to form Asp-AMP and then transferred to the acceptor end of tRNA(Asp/Asn). In Rhizobium rhizogenes (strain K84 / ATCC BAA-868) (Agrobacterium radiobacter), this protein is Aspartate--tRNA(Asp/Asn) ligase.